The chain runs to 116 residues: uncharacterized protein (116 aa).

The next 3 helical transmembrane spans lie at 5-27, 42-64, and 88-110; these read AILLSLAGIADSSYLLLSEAVPC, PFVPALLGLCWFVLSIVVFTAGV, and VLHGYFCPYCFTAYGIGIVVVAI.

Its subcellular location is the cell membrane. This is an uncharacterized protein from Archaeoglobus fulgidus (strain ATCC 49558 / DSM 4304 / JCM 9628 / NBRC 100126 / VC-16).